The chain runs to 339 residues: MRVYYDRDADLNLIKAKKVAIIGYGSQGRAHALNLKDSGAQNVVIALKAGSATIAKAEADGFKVMTVAEAAAWADLMMMATPDELQADIYKADIAGNIRDGAAIAFAHGLNVHFGLIEPKNTVDVVMIAPKGPGHTVRGEYQKGGGVPCLVAIHQNASGNALEVALSYACGVGGGRSGIIETTFQEECETDLFGEQVVLCGGLVELIRAGFETLVEGGYAPEMAYFECLHEVKLIVDLIYEGGIANMNYSISNTAEWGEYVTGPRIITAETKAEMKRVLHDIQTGKFTSDWMQEYRAGAARFKGIRRMNDKHQIEEVGAKLRGMMPWIAKNQLVDKARN.

The 182-residue stretch at 1–182 (MRVYYDRDAD…GGGRSGIIET (182 aa)) folds into the KARI N-terminal Rossmann domain. NADP(+) is bound by residues 24 to 27 (YGSQ), Lys-48, Ser-51, Thr-53, and 83 to 86 (DELQ). Residue His-108 is part of the active site. Residue Gly-134 coordinates NADP(+). The region spanning 183 to 328 (TFQEECETDL…AKLRGMMPWI (146 aa)) is the KARI C-terminal knotted domain. Residues Asp-191, Glu-195, Glu-227, and Glu-231 each contribute to the Mg(2+) site. Residue Ser-252 coordinates substrate.

The protein belongs to the ketol-acid reductoisomerase family. Mg(2+) is required as a cofactor.

The catalysed reaction is (2R)-2,3-dihydroxy-3-methylbutanoate + NADP(+) = (2S)-2-acetolactate + NADPH + H(+). It catalyses the reaction (2R,3R)-2,3-dihydroxy-3-methylpentanoate + NADP(+) = (S)-2-ethyl-2-hydroxy-3-oxobutanoate + NADPH + H(+). Its pathway is amino-acid biosynthesis; L-isoleucine biosynthesis; L-isoleucine from 2-oxobutanoate: step 2/4. It participates in amino-acid biosynthesis; L-valine biosynthesis; L-valine from pyruvate: step 2/4. Its function is as follows. Involved in the biosynthesis of branched-chain amino acids (BCAA). Catalyzes an alkyl-migration followed by a ketol-acid reduction of (S)-2-acetolactate (S2AL) to yield (R)-2,3-dihydroxy-isovalerate. In the isomerase reaction, S2AL is rearranged via a Mg-dependent methyl migration to produce 3-hydroxy-3-methyl-2-ketobutyrate (HMKB). In the reductase reaction, this 2-ketoacid undergoes a metal-dependent reduction by NADPH to yield (R)-2,3-dihydroxy-isovalerate. The protein is Ketol-acid reductoisomerase (NADP(+)) of Allorhizobium ampelinum (strain ATCC BAA-846 / DSM 112012 / S4) (Agrobacterium vitis (strain S4)).